The chain runs to 198 residues: Peptidyl-tRNA hydrolase (198 aa).

Y16 contributes to the tRNA binding site. The active-site Proton acceptor is the H21. 3 residues coordinate tRNA: Y67, N69, and N115.

The protein belongs to the PTH family. In terms of assembly, monomer.

It is found in the cytoplasm. The enzyme catalyses an N-acyl-L-alpha-aminoacyl-tRNA + H2O = an N-acyl-L-amino acid + a tRNA + H(+). Hydrolyzes ribosome-free peptidyl-tRNAs (with 1 or more amino acids incorporated), which drop off the ribosome during protein synthesis, or as a result of ribosome stalling. Its function is as follows. Catalyzes the release of premature peptidyl moieties from peptidyl-tRNA molecules trapped in stalled 50S ribosomal subunits, and thus maintains levels of free tRNAs and 50S ribosomes. This is Peptidyl-tRNA hydrolase from Gloeobacter violaceus (strain ATCC 29082 / PCC 7421).